The chain runs to 310 residues: N-acetylmuramic acid 6-phosphate etherase (310 aa).

Residues 64–227 enclose the SIS domain; the sequence is ITSRLKSNGR…STSVMIKLGK (164 aa). Glu-92 (proton donor) is an active-site residue. Glu-123 is a catalytic residue.

The protein belongs to the GCKR-like family. MurNAc-6-P etherase subfamily. In terms of assembly, homodimer.

The enzyme catalyses N-acetyl-D-muramate 6-phosphate + H2O = N-acetyl-D-glucosamine 6-phosphate + (R)-lactate. Its pathway is amino-sugar metabolism; N-acetylmuramate degradation. Specifically catalyzes the cleavage of the D-lactyl ether substituent of MurNAc 6-phosphate, producing GlcNAc 6-phosphate and D-lactate. The sequence is that of N-acetylmuramic acid 6-phosphate etherase from Prochlorococcus marinus (strain NATL2A).